The chain runs to 396 residues: Elongation factor Tu (396 aa).

The region spanning lysine 10–glutamate 206 is the tr-type G domain. The G1 stretch occupies residues glycine 19–threonine 26. Glycine 19 to threonine 26 contacts GTP. Threonine 26 contacts Mg(2+). The tract at residues glycine 60 to alanine 64 is G2. Positions aspartate 81 to glycine 84 are G3. GTP contacts are provided by residues aspartate 81 to histidine 85 and asparagine 136 to aspartate 139. Residues asparagine 136 to aspartate 139 are G4. The interval serine 174–leucine 176 is G5.

Belongs to the TRAFAC class translation factor GTPase superfamily. Classic translation factor GTPase family. EF-Tu/EF-1A subfamily. In terms of assembly, monomer.

Its subcellular location is the cytoplasm. The catalysed reaction is GTP + H2O = GDP + phosphate + H(+). In terms of biological role, GTP hydrolase that promotes the GTP-dependent binding of aminoacyl-tRNA to the A-site of ribosomes during protein biosynthesis. In Geobacter metallireducens (strain ATCC 53774 / DSM 7210 / GS-15), this protein is Elongation factor Tu.